Here is a 360-residue protein sequence, read N- to C-terminus: Putative FBD-associated F-box protein At5g56430 (360 aa).

In terms of domain architecture, F-box spans 1–53 (MRNISDLPNDLLVKILSLIPIKVAASTSLLSKRWGSVWKLIPTLDYDGTYSAA). 2 Kelch repeats span residues 140–186 (IRYT…EQLD) and 235–285 (VMCS…SVPE). Positions 276–326 (KWEQPNSVPECLLVSLETVKWILYKGTQEEKDVVKYLLKNGNFIKTMSIRF) constitute an FBD domain.

This is Putative FBD-associated F-box protein At5g56430 from Arabidopsis thaliana (Mouse-ear cress).